The primary structure comprises 307 residues: Pantothenate kinase (307 aa).

87-94 is an ATP binding site; sequence GSVAVGKS.

The protein belongs to the prokaryotic pantothenate kinase family.

It localises to the cytoplasm. It carries out the reaction (R)-pantothenate + ATP = (R)-4'-phosphopantothenate + ADP + H(+). It functions in the pathway cofactor biosynthesis; coenzyme A biosynthesis; CoA from (R)-pantothenate: step 1/5. The chain is Pantothenate kinase from Vibrio vulnificus (strain CMCP6).